We begin with the raw amino-acid sequence, 971 residues long: Protein ALWAYS EARLY 1 (971 aa).

The segment covering 1 to 11 (MAPTRKSKSVN) has biased composition (basic residues). Disordered stretches follow at residues 1-40 (MAPT…LADK), 117-137 (SESE…LKRK), 197-260 (IEDF…MFEN), 326-371 (GLLE…GLED), and 421-507 (PKES…KISL). The SANT domain maps to 40–98 (KLGPQWTKRELVRFYDAYRKYVGDWKKVAAAVRNNRSVEMVETLFCMNRAYLSLPEGTA). 3 stretches are compositionally biased toward basic and acidic residues: residues 209–219 (KQLDADDDASR), 332–350 (SSPH…KKSN), and 424–440 (STQD…EVDS). Over residues 450–470 (SSQGPAKQLKTAKTTVESSSA) the composition is skewed to polar residues.

In terms of tissue distribution, expressed ubiquitously in vegetative and reproductive tissues.

It is found in the nucleus. The polypeptide is Protein ALWAYS EARLY 1 (ALY1) (Arabidopsis thaliana (Mouse-ear cress)).